The chain runs to 271 residues: Putative phosphoenolpyruvate synthase regulatory protein (271 aa).

An ADP-binding site is contributed by 152 to 159; it reads GVSRCGKT.

This sequence belongs to the pyruvate, phosphate/water dikinase regulatory protein family. PSRP subfamily.

The catalysed reaction is [pyruvate, water dikinase] + ADP = [pyruvate, water dikinase]-phosphate + AMP + H(+). The enzyme catalyses [pyruvate, water dikinase]-phosphate + phosphate + H(+) = [pyruvate, water dikinase] + diphosphate. Functionally, bifunctional serine/threonine kinase and phosphorylase involved in the regulation of the phosphoenolpyruvate synthase (PEPS) by catalyzing its phosphorylation/dephosphorylation. The chain is Putative phosphoenolpyruvate synthase regulatory protein from Legionella pneumophila (strain Paris).